A 346-amino-acid polypeptide reads, in one-letter code: Threonylcarbamoyl-AMP synthase (346 aa).

In terms of domain architecture, YrdC-like spans aspartate 18 to isoleucine 205. Threonine 40 lines the L-threonine pocket. ATP is bound by residues arginine 63 and asparagine 67. L-threonine is bound at residue histidine 72. Position 123 (threonine 123) interacts with ATP. Positions 127 and 147 each coordinate L-threonine. Residues serine 149 and serine 157 each coordinate ATP. Serine 187 contributes to the L-threonine binding site. The ATP site is built by arginine 201 and tyrosine 240.

This sequence belongs to the SUA5 family.

It localises to the cytoplasm. The catalysed reaction is L-threonine + hydrogencarbonate + ATP = L-threonylcarbamoyladenylate + diphosphate + H2O. Its function is as follows. Required for the formation of a threonylcarbamoyl group on adenosine at position 37 (t(6)A37) in tRNAs that read codons beginning with adenine. Catalyzes the conversion of L-threonine, HCO(3)(-)/CO(2) and ATP to give threonylcarbamoyl-AMP (TC-AMP) as the acyladenylate intermediate, with the release of diphosphate. Is also able to catalyze the reverse reaction in vitro, i.e. the formation of ATP from TC-AMP and PPi. The sequence is that of Threonylcarbamoyl-AMP synthase (ywlC) from Bacillus subtilis (strain 168).